A 488-amino-acid polypeptide reads, in one-letter code: Germacrene A hydroxylase (488 aa).

Over 1-6 (MEVSLT) the chain is Cytoplasmic. The chain crosses the membrane as a helical; Signal-anchor for type II membrane protein span at residues 7–23 (TSIALATIVFFLYKLLT). Residues 24–488 (RPTSSKNRLP…KTELMLVPSF (465 aa)) lie on the Lumenal side of the membrane. 4 N-linked (GlcNAc...) asparagine glycosylation sites follow: Asn-169, Asn-260, Asn-379, and Asn-412. Cys-432 contributes to the heme binding site.

It belongs to the cytochrome P450 family. Heme serves as cofactor. In terms of tissue distribution, expressed in leaf primordia.

It localises to the endoplasmic reticulum membrane. The catalysed reaction is (+)-(R)-germacrene A + 3 reduced [NADPH--hemoprotein reductase] + 3 O2 = germacra-1(10),4,11(13)-trien-12-oate + 3 oxidized [NADPH--hemoprotein reductase] + 4 H2O + 4 H(+). It functions in the pathway secondary metabolite biosynthesis; terpenoid biosynthesis. In terms of biological role, involved in the biosynthesis of germacrene-derived sesquiterpene lactones. Catalyzes three consecutive oxidations of germacrene A to produce germacrene A acid. Could also catalyze the three-step oxidation of non-natural substrate amorphadiene to artemisinic acid. This chain is Germacrene A hydroxylase, found in Helianthus annuus (Common sunflower).